We begin with the raw amino-acid sequence, 31 residues long: Cytochrome b6-f complex subunit 8 (31 aa).

A helical transmembrane segment spans residues 5 to 25; the sequence is IVSLAWAALMVVFTFSLSLVV.

This sequence belongs to the PetN family. As to quaternary structure, the 4 large subunits of the cytochrome b6-f complex are cytochrome b6, subunit IV (17 kDa polypeptide, PetD), cytochrome f and the Rieske protein, while the 4 small subunits are PetG, PetL, PetM and PetN. The complex functions as a dimer.

Its subcellular location is the plastid. It localises to the chloroplast thylakoid membrane. In terms of biological role, component of the cytochrome b6-f complex, which mediates electron transfer between photosystem II (PSII) and photosystem I (PSI), cyclic electron flow around PSI, and state transitions. This chain is Cytochrome b6-f complex subunit 8, found in Acorus calamus (Sweet flag).